Consider the following 319-residue polypeptide: Acetyl esterase (319 aa).

The Involved in the stabilization of the negatively charged intermediate by the formation of the oxyanion hole signature appears at 91-93; sequence HGG. Catalysis depends on residues S165, D262, and H292.

It belongs to the 'GDXG' lipolytic enzyme family. Homodimer. Interacts with MalT and MelA.

It is found in the cytoplasm. Functionally, displays esterase activity towards short chain fatty esters (acyl chain length of up to 8 carbons). Able to hydrolyze triacetylglycerol (triacetin) and tributyrylglycerol (tributyrin), but not trioleylglycerol (triolein) or cholesterol oleate. Negatively regulates MalT activity by antagonizing maltotriose binding. Inhibits MelA galactosidase activity. This Escherichia coli O8 (strain IAI1) protein is Acetyl esterase.